The following is a 189-amino-acid chain: Glucose-6-phosphate isomerase (189 aa).

The Fe cation site is built by histidine 88, histidine 90, glutamate 97, and histidine 136.

This sequence belongs to the archaeal-type GPI family. In terms of assembly, homodimer.

The protein localises to the cytoplasm. The catalysed reaction is alpha-D-glucose 6-phosphate = beta-D-fructose 6-phosphate. It functions in the pathway carbohydrate degradation; glycolysis; D-glyceraldehyde 3-phosphate and glycerone phosphate from D-glucose: step 2/4. This chain is Glucose-6-phosphate isomerase, found in Thermococcus kodakarensis (strain ATCC BAA-918 / JCM 12380 / KOD1) (Pyrococcus kodakaraensis (strain KOD1)).